A 403-amino-acid polypeptide reads, in one-letter code: Aspartic protease pepA (403 aa).

The N-terminal stretch at 1-20 is a signal peptide; sequence MVLITQLGAALAVFSALTVA. Residues 21–67 constitute a propeptide, activation peptide; the sequence is APTKGKARFSAPQVGIPKKAKHHPAAAYARALHKFGMKIPKAVSDAA. Residues 82 to 400 form the Peptidase A1 domain; it reads YVTQVTVGGS…DTQGPRIGFA (319 aa). Residue D98 is part of the active site. A glycan (N-linked (GlcNAc...) asparagine) is linked at N270. D293 is an active-site residue. C329 and C362 are joined by a disulfide.

This sequence belongs to the peptidase A1 family. In terms of assembly, monomer.

It localises to the secreted. In terms of biological role, secreted aspartic endopeptidase that allows assimilation of proteinaceous substrates. The scissile peptide bond is attacked by a nucleophilic water molecule activated by two aspartic residues in the active site. Shows a broad primary substrate specificity. Favors hydrophobic residues at the P1 and P1' positions. This Arthroderma gypseum (strain ATCC MYA-4604 / CBS 118893) (Microsporum gypseum) protein is Aspartic protease pepA.